A 172-amino-acid polypeptide reads, in one-letter code: Large ribosomal subunit protein uL10 (172 aa).

Belongs to the universal ribosomal protein uL10 family. As to quaternary structure, part of the ribosomal stalk of the 50S ribosomal subunit. The N-terminus interacts with L11 and the large rRNA to form the base of the stalk. The C-terminus forms an elongated spine to which L12 dimers bind in a sequential fashion forming a multimeric L10(L12)X complex.

Its function is as follows. Forms part of the ribosomal stalk, playing a central role in the interaction of the ribosome with GTP-bound translation factors. The chain is Large ribosomal subunit protein uL10 from Bradyrhizobium sp. (strain ORS 278).